The following is a 280-amino-acid chain: Foldase protein PrsA 4 (280 aa).

Residues 1-21 form the signal peptide; the sequence is MKRKKLVIGSILMGMTLSLSA. C22 is lipidated: N-palmitoyl cysteine. C22 carries the S-diacylglycerol cysteine lipid modification. The PpiC domain occupies 132-222; that stretch reads KPKLQVSHIL…FGYHIIKLTD (91 aa).

It belongs to the PrsA family.

It is found in the cell membrane. It catalyses the reaction [protein]-peptidylproline (omega=180) = [protein]-peptidylproline (omega=0). Functionally, plays a major role in protein secretion by helping the post-translocational extracellular folding of several secreted proteins. In Bacillus cereus (strain ATCC 14579 / DSM 31 / CCUG 7414 / JCM 2152 / NBRC 15305 / NCIMB 9373 / NCTC 2599 / NRRL B-3711), this protein is Foldase protein PrsA 4 (prsA4).